A 716-amino-acid chain; its full sequence is Segment polarity protein dishevelled homolog DVL-3 (716 aa).

The 82-residue stretch at 1-82 (MGETKIIYHL…RVVSWLVSAE (82 aa)) folds into the DIX domain. The residue at position 27 (Arg-27) is an Omega-N-methylarginine. Phosphoserine occurs at positions 48 and 125. Positions 85 to 235 (HPEPAPFCAD…VSRIERSSSF (151 aa)) are disordered. Basic and acidic residues predominate over residues 142–156 (QRERPRRRDGPEHAA). Residues 175–190 (SSSTLMSSELETTSFF) show a composition bias toward low complexity. Phosphoserine is present on Ser-192. Positions 199–212 (SRFSSSTEQSSASR) are enriched in low complexity. Arg-212 bears the Omega-N-methylarginine mark. The span at 213–226 (LMRRHKRRRRKQKV) shows a compositional bias: basic residues. The PDZ domain occupies 249-321 (TVTLNMEKYN…NDDAVRVLRE (73 aa)). An Asymmetric dimethylarginine; by PRMT1; alternate modification is found at Arg-271. 2 positions are modified to symmetric dimethylarginine; by PRMT7; alternate: Arg-271 and Arg-342. Arg-342 is modified (omega-N-methylarginine; alternate). Position 346 is a phosphothreonine (Thr-346). Residues 422 to 496 (PESGLEVRDR…SEQCYYIFGD (75 aa)) form the DEP domain. Positions 546 to 691 (PYNPHPGFPE…PPGRDLASVP (146 aa)) are disordered. Positions 565-581 (ASSQHSEGSRSSGSNRS) are enriched in low complexity. Basic and acidic residues-rich tracts occupy residues 582–595 (GSDR…KAGD) and 604–622 (ESDH…RAPS). Arg-614 carries the post-translational modification Symmetric dimethylarginine; by PRMT7. Composition is skewed to pro residues over residues 653-663 (YGPPGVPPLYG) and 670-682 (TPPP…PGAP). Ser-697 bears the Phosphoserine mark. Omega-N-methylarginine; alternate is present on Arg-698. Arg-698 carries the dimethylated arginine; alternate modification. A Phosphoserine modification is found at Ser-700.

Belongs to the DSH family. In terms of assembly, interacts (via the PDZ domain) with the C-terminal regions of VANGL1 and VANGL2. Interacts (via the region containing both the PDZ and DEP domains) with LRRFIP2; the DIX domain may inhibit this interaction. Interacts with CYLD. Interacts with CEP164 and DAB2. Interacts with DCDC2. Interacts with FOXK1 and FOXK2. Interacts with DAAM2. In terms of processing, ubiquitinated. Deubiquitinated by CYLD, which acts on 'Lys-63'-linked ubiquitin chains. Post-translationally, phosphorylated by CSNK1D. Arginine methylation may function as a switch in regulation of function in Wnt signaling. As to expression, ubiquitous.

The protein localises to the cytoplasm. In terms of biological role, involved in the signal transduction pathway mediated by multiple Wnt genes. This Mus musculus (Mouse) protein is Segment polarity protein dishevelled homolog DVL-3 (Dvl3).